The primary structure comprises 183 residues: Adenine phosphoribosyltransferase (183 aa).

The protein belongs to the purine/pyrimidine phosphoribosyltransferase family. As to quaternary structure, homodimer.

It is found in the cytoplasm. The enzyme catalyses AMP + diphosphate = 5-phospho-alpha-D-ribose 1-diphosphate + adenine. Its pathway is purine metabolism; AMP biosynthesis via salvage pathway; AMP from adenine: step 1/1. Functionally, catalyzes a salvage reaction resulting in the formation of AMP, that is energically less costly than de novo synthesis. This is Adenine phosphoribosyltransferase from Proteus mirabilis (strain HI4320).